Here is a 215-residue protein sequence, read N- to C-terminus: Glutathione S-transferase D2 (215 aa).

The region spanning 1-80 (MDFYYMPGGG…YLVEKYGKDD (80 aa)) is the GST N-terminal domain. Residues 50–52 (HTI) and 64–66 (ESR) contribute to the glutathione site. In terms of domain architecture, GST C-terminal spans 86–212 (DPKKRAVINQ…MKALFDARKL (127 aa)).

Belongs to the GST superfamily. Delta family. Homodimer.

It carries out the reaction RX + glutathione = an S-substituted glutathione + a halide anion + H(+). Conjugation of reduced glutathione to a wide number of exogenous and endogenous hydrophobic electrophiles. May be involved in detoxification. This Drosophila melanogaster (Fruit fly) protein is Glutathione S-transferase D2.